Consider the following 891-residue polypeptide: Major core protein 4a precursor (891 aa).

It belongs to the poxviridae protein P4a family. As to quaternary structure, interacts with P39/A4.

It localises to the virion. Its function is as follows. Core protein 4a is the most abundant virion protein. Major component of the virion core that undergoes proteolytic processing during the immature virion (IV) to mature virion (MV) transition. The chain is Major core protein 4a precursor from Fowlpox virus (strain NVSL) (FPV).